An 87-amino-acid chain; its full sequence is Large ribosomal subunit protein bL31B (87 aa).

Belongs to the bacterial ribosomal protein bL31 family. Type B subfamily. In terms of assembly, part of the 50S ribosomal subunit.

This Salinispora arenicola (strain CNS-205) protein is Large ribosomal subunit protein bL31B.